The sequence spans 1142 residues: Auxin response factor 5 (1142 aa).

The TF-B3 DNA-binding region spans 148 to 250 (FCKTLTASDT…QLLLGIRRAN (103 aa)). Residues 1009-1093 (RTFTKVYKRG…RCIRILSPQE (85 aa)) enclose the PB1 domain. The tract at residues 1114-1142 (SSSDGVNGWRPRCDQNPGNPSIGPYDQFE) is disordered.

The protein belongs to the ARF family. In terms of assembly, homodimers and heterodimers. As to expression, expressed in roots, culms, leaves and young panicles.

It is found in the nucleus. In terms of biological role, auxin response factors (ARFs) are transcriptional factors that bind specifically to the DNA sequence 5'-TGTCTC-3' found in the auxin-responsive promoter elements (AuxREs). This Oryza sativa subsp. japonica (Rice) protein is Auxin response factor 5 (ARF5).